Reading from the N-terminus, the 378-residue chain is POU domain, class 3, transcription factor 2 (378 aa).

Disordered regions lie at residues M1–Q28, S86–R118, and L151–S205. A compositionally biased stretch (basic and acidic residues) spans M164–H181. In terms of domain architecture, POU-specific spans E200–D274. S279 carries the post-translational modification Phosphoserine. The segment at residues K292–T351 is a DNA-binding region (homeobox). The tract at residues E347 to Q378 is disordered.

This sequence belongs to the POU transcription factor family. Class-3 subfamily. As to expression, predominantly expressed in the central nervous system, with strong expression in the cerebellum.

It is found in the nucleus. Functionally, transcription factor that may play important roles in patterning the embryonic brain. This is POU domain, class 3, transcription factor 2 (pou3f2) from Danio rerio (Zebrafish).